We begin with the raw amino-acid sequence, 493 residues long: Ectonucleoside triphosphate diphosphohydrolase 8 (493 aa).

The Cytoplasmic portion of the chain corresponds to methionine 1–valine 7. The helical transmembrane segment at valine 8–valine 28 threads the bilayer. Residues aspartate 29–proline 463 are Extracellular-facing. 3 N-linked (GlcNAc...) asparagine glycosylation sites follow: asparagine 65, asparagine 79, and asparagine 133. A disulfide bridge links cysteine 76 with cysteine 100. Glutamate 166 functions as the Proton acceptor in the catalytic mechanism. 9 N-linked (GlcNAc...) asparagine glycosylation sites follow: asparagine 223, asparagine 234, asparagine 267, asparagine 324, asparagine 330, asparagine 361, asparagine 372, asparagine 382, and asparagine 445. Cysteine 244 and cysteine 291 are joined by a disulfide. Cysteine 327 and cysteine 333 form a disulfide bridge. A disulfide bond links cysteine 379 and cysteine 401. A helical membrane pass occupies residues serine 464–leucine 486. Topologically, residues glutamine 487–lysine 493 are cytoplasmic.

Belongs to the GDA1/CD39 NTPase family. Requires Ca(2+) as cofactor. Mg(2+) serves as cofactor. N-glycosylated.

The protein resides in the cell membrane. It catalyses the reaction a ribonucleoside 5'-triphosphate + 2 H2O = a ribonucleoside 5'-phosphate + 2 phosphate + 2 H(+). In terms of biological role, canalicular ectonucleoside NTPDase responsible for the main hepatic NTPDase activity. Ectonucleoside ATPases catalyze the hydrolysis of gamma- and beta-phosphate residues of nucleotides, playing a central role in concentration of extracellular nucleotides. This Gallus gallus (Chicken) protein is Ectonucleoside triphosphate diphosphohydrolase 8 (ENTPD8).